The chain runs to 558 residues: S-layer protein (558 aa).

A signal peptide spans 1-28 (MAMSLKKIGAIAVGGAMVATALASGVAA). 7 N-linked (GlcNAc...) asparagine glycosylation sites follow: N112, N138, N158, N197, N226, N291, and N374.

It belongs to the Mj S-layer protein family.

The protein resides in the secreted. Its subcellular location is the cell wall. The protein localises to the S-layer. Its function is as follows. S-layer protein. The S-layer is a paracrystalline mono-layered assembly of proteins which coat the surface of the cell. The polypeptide is S-layer protein (sla) (Methanocaldococcus jannaschii (strain ATCC 43067 / DSM 2661 / JAL-1 / JCM 10045 / NBRC 100440) (Methanococcus jannaschii)).